A 270-amino-acid chain; its full sequence is Transcription factor PU.1 (270 aa).

The segment at 124-162 (LSPAQPSSDEEEGERQSPPLEVSDGEADGLEPGPGLLHG) is disordered. 2 positions are modified to phosphoserine: S140 and S146. Residues 153–162 (LEPGPGLLHG) show a composition bias toward low complexity. Positions 170-253 (IRLYQFLLDL…VKKKLTYQFS (84 aa)) form a DNA-binding region, ETS. Residues K217, R230, R233, and K243 each contribute to the DNA site.

This sequence belongs to the ETS family. As to quaternary structure, binds DNA as a monomer. Can form homomers. Directly interacts with CEBPD/NF-IL6-beta; this interaction does not affect DNA-binding properties of each partner. Interacts with NONO/p54(nrb). Interacts with RUNX1/AML1. Interacts with GFI1; the interaction represses SPI1 transcriptional activity, hence blocks SPI1-induced macrophage differentiation of myeloid progenitor cells. Interacts with CEBPE. Interacts with IRF4/Pip and IRF8. Interacts with JUN. Interacts with RB1. Interacts with TBP.

It is found in the nucleus. With respect to regulation, transcriptional activity at macrophage-specific genes is inhibited by interaction with GFI1, which results in the inhibition of SPI1-induced macrophage differentiation of myeloid progenitor cells, but not that of the granulocyte lineage. In terms of biological role, pioneer transcription factor, which controls hematopoietic cell fate by decompacting stem cell heterochromatin and allowing other transcription factors to enter otherwise inaccessible genomic sites. Once in open chromatin, can directly control gene expression by binding genetic regulatory elements and can also more broadly influence transcription by recruiting transcription factors, such as interferon regulatory factors (IRFs), to otherwise inaccessible genomic regions. Transcriptionally activates genes important for myeloid and lymphoid lineages, such as CSF1R. Transcriptional activation from certain promoters, possibly containing low affinity binding sites, is achieved cooperatively with other transcription factors. FCER1A transactivation is achieved in cooperation with GATA1. May be particularly important for the pro- to pre-B cell transition. Binds (via the ETS domain) onto the purine-rich DNA core sequence 5'-GAGGAA-3', also known as the PU-box. In vitro can bind RNA and interfere with pre-mRNA splicing. This Sus scrofa (Pig) protein is Transcription factor PU.1 (SPI1).